The sequence spans 88 residues: Small ribosomal subunit protein bS18 (88 aa).

Residues 1 to 22 (MSTKNAKPKKEAQRRPSRKAKV) form a disordered region.

It belongs to the bacterial ribosomal protein bS18 family. Part of the 30S ribosomal subunit. Forms a tight heterodimer with protein bS6.

Binds as a heterodimer with protein bS6 to the central domain of the 16S rRNA, where it helps stabilize the platform of the 30S subunit. The chain is Small ribosomal subunit protein bS18 (rpsR) from Thermus thermophilus.